A 382-amino-acid polypeptide reads, in one-letter code: D-galactonate dehydratase (382 aa).

Asp183 is a Mg(2+) binding site. His185 acts as the Proton donor in catalysis. Mg(2+)-binding residues include Glu209 and Glu235. The active-site Proton acceptor is His285.

It belongs to the mandelate racemase/muconate lactonizing enzyme family. GalD subfamily. It depends on Mg(2+) as a cofactor.

It catalyses the reaction D-galactonate = 2-dehydro-3-deoxy-D-galactonate + H2O. It participates in carbohydrate acid metabolism; D-galactonate degradation; D-glyceraldehyde 3-phosphate and pyruvate from D-galactonate: step 1/3. In terms of biological role, catalyzes the dehydration of D-galactonate to 2-keto-3-deoxy-D-galactonate. The polypeptide is D-galactonate dehydratase (Cronobacter sakazakii (strain ATCC BAA-894) (Enterobacter sakazakii)).